Reading from the N-terminus, the 160-residue chain is 6,7-dimethyl-8-ribityllumazine synthase (160 aa).

5-amino-6-(D-ribitylamino)uracil is bound by residues Phe-22, 57–59 (AVE), and 81–83 (AVI). 86–87 (GT) is a binding site for (2S)-2-hydroxy-3-oxobutyl phosphate. The Proton donor role is filled by His-89. Phe-114 is a 5-amino-6-(D-ribitylamino)uracil binding site. Arg-128 is a binding site for (2S)-2-hydroxy-3-oxobutyl phosphate.

The protein belongs to the DMRL synthase family. Forms an icosahedral capsid composed of 60 subunits, arranged as a dodecamer of pentamers.

It catalyses the reaction (2S)-2-hydroxy-3-oxobutyl phosphate + 5-amino-6-(D-ribitylamino)uracil = 6,7-dimethyl-8-(1-D-ribityl)lumazine + phosphate + 2 H2O + H(+). It participates in cofactor biosynthesis; riboflavin biosynthesis; riboflavin from 2-hydroxy-3-oxobutyl phosphate and 5-amino-6-(D-ribitylamino)uracil: step 1/2. In terms of biological role, catalyzes the formation of 6,7-dimethyl-8-ribityllumazine by condensation of 5-amino-6-(D-ribitylamino)uracil with 3,4-dihydroxy-2-butanone 4-phosphate. This is the penultimate step in the biosynthesis of riboflavin. This is 6,7-dimethyl-8-ribityllumazine synthase from Shewanella sediminis (strain HAW-EB3).